The following is a 240-amino-acid chain: CRISPR system aCascade subunit Cas5 1 (240 aa).

This sequence belongs to the CRISPR-associated protein Cas5 family. Subtype I-A/Apern subfamily. As to quaternary structure, part of the aCascade ribonucleoprotein complex, minimally composed of Csa2 and Cas5a, which binds crRNA. Other possible components of aCascade in strain P1 are Cas6b (SSO1437) and Csa5 (SSO1443), while SSO1399, Cas5b (SSO1400) and SSO1401 have sometimes been seen weakly associated. Csa2 is probably the major RNA-binding subunit. The Csa2-Cas5a-crRNA complex also binds target DNA homologous to crRNA, probably forming an R-loop. Purified aCascade forms a filament about 6 nm in width.

Its function is as follows. CRISPR (clustered regularly interspaced short palindromic repeat) is an adaptive immune system that provides protection against mobile genetic elements (viruses, transposable elements and conjugative plasmids). CRISPR clusters contain spacers, sequences complementary to antecedent mobile elements, and target invading nucleic acids. CRISPR clusters are transcribed and processed into CRISPR RNA (crRNA). The chain is CRISPR system aCascade subunit Cas5 1 (cas5a) from Saccharolobus solfataricus (strain ATCC 35092 / DSM 1617 / JCM 11322 / P2) (Sulfolobus solfataricus).